The primary structure comprises 189 residues: MAERGSDIRPGHILEHNNALYLVVKVMHTQPGKGGAYIQAEMKNLKTGAKQYERFRTDGDIKRAIVDESDYQYIYGDGSMITVMHLKTYEQITISKDILGDKSIYLQDNIVITLVFYNGEIISAKVPDYVTLRVIETEAVIKGQTVSSSSYKVAMLENNQRISVPTFIKPGDKIVVYTPDDSYYERAKG.

Belongs to the elongation factor P family.

Its subcellular location is the cytoplasm. The protein operates within protein biosynthesis; polypeptide chain elongation. In terms of biological role, involved in peptide bond synthesis. Stimulates efficient translation and peptide-bond synthesis on native or reconstituted 70S ribosomes in vitro. Probably functions indirectly by altering the affinity of the ribosome for aminoacyl-tRNA, thus increasing their reactivity as acceptors for peptidyl transferase. The sequence is that of Elongation factor P from Ehrlichia canis (strain Jake).